A 56-amino-acid chain; its full sequence is Botcinic acid biosynthesis cluster B protein 14 (56 aa).

Its pathway is polyketide biosynthesis. Functionally, part of the gene cluster B that mediates the biosynthesis of botcinic acid and its botcinin derivatives, acetate-derived polyketides that contribute to virulence when combined with the sesquiterpene botrydial. Botcinic acid and its derivatives have been shown to induce chlorosis and necrosis during host plant infection, but also have antifungal activities. Two polyketide synthases, BOA6 and BOA9, are involved in the biosynthesis of botcinins. BOA6 mediates the formation of the per-methylated tetraketide core by condensation of four units of malonyl-CoA with one unit of acetyl-CoA, which would be methylated in activated methylene groups to yield a bicyclic acid intermediate that could then either be converted to botrylactone derivatives or lose the starter acetate unit through a retro-Claisen type C-C bond cleavage to yield botcinin derivatives. The second polyketide synthase, BOA9, is probably required for the biosynthesis of the tetraketide side chain of botcinins. The methyltransferase (MT) domain within BOA6 is probably responsible for the incorporation of four methyl groups. The trans-enoyl reductase BOA5 might take over the enoyl reductase function of BOA6 that misses an ER domain. The monooxygenases BOA2, BOA3 and BOA4 might be involved in further hydroxylations at C4, C5 and C8, whereas BOA7, close to BOA9, could potentially be involved in the hydroxylation at C4 in the side chain of botcinins. This is Botcinic acid biosynthesis cluster B protein 14 from Botryotinia fuckeliana (strain B05.10) (Noble rot fungus).